The chain runs to 707 residues: Polyribonucleotide nucleotidyltransferase (707 aa).

Mg(2+) is bound by residues Asp-486 and Asp-492. In terms of domain architecture, KH spans Pro-553–Ile-612. An S1 motif domain is found at Gly-622 to Lys-690.

Belongs to the polyribonucleotide nucleotidyltransferase family. Component of the RNA degradosome, which is a multiprotein complex involved in RNA processing and mRNA degradation. Mg(2+) serves as cofactor.

It localises to the cytoplasm. The enzyme catalyses RNA(n+1) + phosphate = RNA(n) + a ribonucleoside 5'-diphosphate. Its function is as follows. Involved in mRNA degradation. Catalyzes the phosphorolysis of single-stranded polyribonucleotides processively in the 3'- to 5'-direction. The polypeptide is Polyribonucleotide nucleotidyltransferase (Buchnera aphidicola subsp. Schizaphis graminum (strain Sg)).